Here is a 236-residue protein sequence, read N- to C-terminus: Purine nucleoside phosphorylase DeoD-type (236 aa).

A purine D-ribonucleoside is bound at residue H4. Phosphate-binding positions include G20, R24, R43, and 87-90 (RVGT). Residues 179 to 181 (EME) and 203 to 204 (SD) each bind a purine D-ribonucleoside. D204 serves as the catalytic Proton donor.

It belongs to the PNP/UDP phosphorylase family. Homohexamer; trimer of homodimers.

It carries out the reaction a purine D-ribonucleoside + phosphate = a purine nucleobase + alpha-D-ribose 1-phosphate. The catalysed reaction is a purine 2'-deoxy-D-ribonucleoside + phosphate = a purine nucleobase + 2-deoxy-alpha-D-ribose 1-phosphate. Its function is as follows. Catalyzes the reversible phosphorolytic breakdown of the N-glycosidic bond in the beta-(deoxy)ribonucleoside molecules, with the formation of the corresponding free purine bases and pentose-1-phosphate. This chain is Purine nucleoside phosphorylase DeoD-type, found in Streptococcus pneumoniae (strain JJA).